Consider the following 418-residue polypeptide: MNLTELKKMPVPNLVALAQSMDIEGVGRSRKQDLIFAILKAQAKKGEDIYGDGVLEILSDGFGFLRSADASYLAGPDDIYVSPSQIRRFALRTGDTISGKIRPPKDGERYFALLKVNDINFDRPENAKSKILFENFTPLFAQKRLTLEIGNGSTEDITARTIDLVAPIGKGQRGLIVSPPKAGKTMMLQNIAQSIGHNHPDCYLIVLLIDERPEEVTEMARSVRGEVISSTFDEPATRHVQVAEMVIEKAKRLVEHKRDVVILLDSITRLARAYNTVVPSSGKVLTGGVDANALQRPKRFFGAARNVEEGGSLTILATALVDTGSRMDDVIYEEFKGTGNMEIHMDRRIAEKRIFPAININRSGTRREELLMGQAELQKMWILRKILHPMDELAAMEFLHDKLKATKTNDEFFSSMKG.

One can recognise a Rho RNA-BD domain in the interval 48-123 (DIYGDGVLEI…LKVNDINFDR (76 aa)). Residues 169-174 (GKGQRG), 181-186 (KAGKTM), and arginine 212 each bind ATP.

Belongs to the Rho family. In terms of assembly, homohexamer. The homohexamer assembles into an open ring structure.

Functionally, facilitates transcription termination by a mechanism that involves Rho binding to the nascent RNA, activation of Rho's RNA-dependent ATPase activity, and release of the mRNA from the DNA template. This is Transcription termination factor Rho from Allochromatium vinosum (strain ATCC 17899 / DSM 180 / NBRC 103801 / NCIMB 10441 / D) (Chromatium vinosum).